Consider the following 92-residue polypeptide: Cell division protein FtsB (92 aa).

The Cytoplasmic portion of the chain corresponds to 1–3 (MKV). A helical transmembrane segment spans residues 4–21 (VPILLFVLLAALQYRLWF). At 22 to 92 (GKNSIPEYVA…TFYRILPSEE (71 aa)) the chain is on the periplasmic side. Positions 31-74 (AMEKSVAEQAEQNTELLQRNNLLKADIQDLKVGLEAVEERARNE) form a coiled coil.

The protein belongs to the FtsB family. In terms of assembly, part of a complex composed of FtsB, FtsL and FtsQ.

It localises to the cell inner membrane. Functionally, essential cell division protein. May link together the upstream cell division proteins, which are predominantly cytoplasmic, with the downstream cell division proteins, which are predominantly periplasmic. The sequence is that of Cell division protein FtsB from Pseudoalteromonas atlantica (strain T6c / ATCC BAA-1087).